The chain runs to 201 residues: LIM domain-containing protein PLIM2b (201 aa).

LIM zinc-binding domains lie at 8 to 68 (DKCT…LFKE) and 103 to 163 (DKCA…LFME). The tract at residues 171-201 (KKKSESQEVLPEVVPEEQPAPPPPDENREDN) is disordered. Positions 177-187 (QEVLPEVVPEE) are enriched in low complexity.

As to quaternary structure, interacts with NEK3.

This chain is LIM domain-containing protein PLIM2b, found in Oryza sativa subsp. japonica (Rice).